The following is an 852-amino-acid chain: Lon protease homolog 2, peroxisomal (852 aa).

S2 bears the N-acetylserine mark. The Lon N-terminal domain maps to L13–I222. G375–T382 provides a ligand contact to ATP. A Lon proteolytic domain is found at L651–G837. Active-site residues include S743 and K786. Positions S850 to L852 match the Microbody targeting signal motif.

Belongs to the peptidase S16 family. Interacts with PEX5. Interacts with TYSND1. May interact with enzymes involved in beta-oxidation of fatty acids, including ACOX1/AOX. As to expression, widely expressed, with high levels in the liver, kidney and pancreas.

The protein resides in the peroxisome matrix. It carries out the reaction Hydrolysis of proteins in presence of ATP.. Its function is as follows. ATP-dependent serine protease that mediates the selective degradation of misfolded and unassembled polypeptides in the peroxisomal matrix. Necessary for type 2 peroxisome targeting signal (PTS2)-containing protein processing and facilitates peroxisome matrix protein import. May indirectly regulate peroxisomal fatty acid beta-oxidation through degradation of the self-processed forms of TYSND1. In Homo sapiens (Human), this protein is Lon protease homolog 2, peroxisomal.